Reading from the N-terminus, the 210-residue chain is MADDKSTNEAAAKPVAEKATATALAKKAPAKAAAADKAAPAAKGETVAAKPAKASAKKDVAAPREQVLKVHHLRPAAGAKKEKTRVGRGEGSKGKTAGRGTKGTKARYQVRPGFQGGQLPFHMRTPKLRGFKNPFRVEYQVVNLEKLAELYPAGGDVTVAALVAKGAVRKNEKVKVLGNGDIAVKLNVAVDKVSGSAEQKIVAAGGSVNR.

2 disordered regions span residues 1–64 (MADD…AAPR) and 76–104 (AAGA…TKGT). Residues 9–54 (EAAAKPVAEKATATALAKKAPAKAAAADKAAPAAKGETVAAKPAKA) are compositionally biased toward low complexity. Over residues 79–93 (AKKEKTRVGRGEGSK) the composition is skewed to basic and acidic residues.

It belongs to the universal ribosomal protein uL15 family. In terms of assembly, part of the 50S ribosomal subunit.

Its function is as follows. Binds to the 23S rRNA. The polypeptide is Large ribosomal subunit protein uL15 (Leifsonia xyli subsp. xyli (strain CTCB07)).